Consider the following 706-residue polypeptide: Polyribonucleotide nucleotidyltransferase (706 aa).

Mg(2+) contacts are provided by Asp-483 and Asp-489. The 60-residue stretch at 550–609 (PRITTIWVKTDKIRDVIGTGGKNIRNITETTGVTVDIEDTGRINIASTSKEACDLAIQMI) folds into the KH domain. One can recognise an S1 motif domain in the interval 619–687 (GKLYMGIVKK…KNGKVKLSRK (69 aa)).

This sequence belongs to the polyribonucleotide nucleotidyltransferase family. The cofactor is Mg(2+).

The protein resides in the cytoplasm. The catalysed reaction is RNA(n+1) + phosphate = RNA(n) + a ribonucleoside 5'-diphosphate. In terms of biological role, involved in mRNA degradation. Catalyzes the phosphorolysis of single-stranded polyribonucleotides processively in the 3'- to 5'-direction. In Pelobacter propionicus (strain DSM 2379 / NBRC 103807 / OttBd1), this protein is Polyribonucleotide nucleotidyltransferase.